The primary structure comprises 319 residues: Acetyl-coenzyme A carboxylase carboxyl transferase subunit alpha (319 aa).

The CoA carboxyltransferase C-terminal domain occupies 38-293 (HALQDKLRLR…KAVLLNELDA (256 aa)).

It belongs to the AccA family. In terms of assembly, acetyl-CoA carboxylase is a heterohexamer composed of biotin carboxyl carrier protein (AccB), biotin carboxylase (AccC) and two subunits each of ACCase subunit alpha (AccA) and ACCase subunit beta (AccD).

It is found in the cytoplasm. It carries out the reaction N(6)-carboxybiotinyl-L-lysyl-[protein] + acetyl-CoA = N(6)-biotinyl-L-lysyl-[protein] + malonyl-CoA. It participates in lipid metabolism; malonyl-CoA biosynthesis; malonyl-CoA from acetyl-CoA: step 1/1. Functionally, component of the acetyl coenzyme A carboxylase (ACC) complex. First, biotin carboxylase catalyzes the carboxylation of biotin on its carrier protein (BCCP) and then the CO(2) group is transferred by the carboxyltransferase to acetyl-CoA to form malonyl-CoA. The polypeptide is Acetyl-coenzyme A carboxylase carboxyl transferase subunit alpha (Stenotrophomonas maltophilia (strain R551-3)).